The following is a 1656-amino-acid chain: Probable phospholipid-transporting ATPase DNF3 (1656 aa).

Topologically, residues 1-164 (MGIADGQRRR…PRQLYAQFSK (164 aa)) are lumenal. The interval 36 to 74 (ELEDINESKTFSGSDNNDKDDRDETSGNYAAEEDYEMEE) is disordered. The span at 51–60 (NNDKDDRDET) shows a compositional bias: basic and acidic residues. Residues 165 to 185 (LANTYFFIVAVLQMIPGWSTT) form a helical membrane-spanning segment. Residues 186 to 451 (GTYTTIIPLC…RTKAPKLQRK (266 aa)) are Cytoplasmic-facing. A helical transmembrane segment spans residues 452 to 472 (INMIIVFMVFVVATISLFSYL). At 473 to 495 (GHVLHKKKYIDQNKAWYLFQADA) the chain is on the lumenal side. The helical transmembrane segment at 496–516 (GVAPTIMSFIIMYNTVIPLSL) threads the bilayer. Over 517-1157 (YVTMEIIKVV…ISKMNAVSQE (641 aa)) the chain is Cytoplasmic. Aspartate 566 serves as the catalytic 4-aspartylphosphate intermediate. Aspartate 566, lysine 567, and threonine 568 together coordinate ATP. Residue aspartate 566 coordinates Mg(2+). Threonine 568 contributes to the Mg(2+) binding site. Serine 627 is subject to Phosphoserine. ATP-binding positions include glutamate 765, phenylalanine 813, serine 815, lysine 818, lysine 838, arginine 1034, threonine 1035, threonine 1114, glycine 1115, aspartate 1116, 1167–1174 (VVVIDGAT), arginine 1202, and lysine 1208. The helical transmembrane segment at 1158 to 1178 (VDSGNIAHCVVVIDGATMAMF) threads the bilayer. Residues 1179-1318 (EGNPTYMSVF…MFSGSSLYEP (140 aa)) lie on the Lumenal side of the membrane. Aspartate 1229 serves as a coordination point for Mg(2+). The ATP site is built by asparagine 1232 and aspartate 1233. Residues 1319–1339 (WSLSMFNTLFTSLPVLCIGMF) form a helical membrane-spanning segment. The Cytoplasmic portion of the chain corresponds to 1340–1365 (EKDLKPMTLLTVPELYSYGRLSQGFN). Residues 1366–1386 (WLIFMEWVILATTNSLIITFL) form a helical membrane-spanning segment. Over 1387-1395 (NVVMWGMSS) the chain is Lumenal. The chain crosses the membrane as a helical span at residues 1396–1416 (LSDNTMYPLGLINFTAIVALI). The Cytoplasmic segment spans residues 1417-1432 (NVKSQFVEMHNRNWLA). A helical transmembrane segment spans residues 1433-1453 (FTSVVLSCGGWLVWCCALPIL). The Lumenal segment spans residues 1454–1473 (NNTDQIYDVAYGFYNHFGKD). Residues 1474-1494 (ITFWCTSLVLALLPITLDIVY) traverse the membrane as a helical segment. Topologically, residues 1495-1656 (KTFKVMIWPS…IIQARLKDLE (162 aa)) are cytoplasmic. A disordered region spans residues 1554–1576 (PRTNSRASAKTHNSSIYSMSNGN).

Belongs to the cation transport ATPase (P-type) (TC 3.A.3) family. Type IV subfamily. In terms of assembly, component of a flippase complex consisting of DNF3 and YNR048W/CRF1. Interacts with YNR048W/CRF1; the interaction is direct and required for proper expression and endoplasmic reticulum (ER) export of either partner. It depends on Mg(2+) as a cofactor.

The protein localises to the golgi apparatus. It localises to the trans-Golgi network membrane. The protein resides in the endosome membrane. It catalyses the reaction ATP + H2O + phospholipidSide 1 = ADP + phosphate + phospholipidSide 2.. The enzyme catalyses a 1,2-diacyl-sn-glycero-3-phosphocholine(out) + ATP + H2O = a 1,2-diacyl-sn-glycero-3-phosphocholine(in) + ADP + phosphate + H(+). It carries out the reaction a 1,2-diacyl-sn-glycero-3-phosphoethanolamine(out) + ATP + H2O = a 1,2-diacyl-sn-glycero-3-phosphoethanolamine(in) + ADP + phosphate + H(+). In terms of biological role, catalytic component of a P4-ATPase flippase complex which catalyzes the hydrolysis of ATP coupled to the transport of phosphatidylcholine and small amounts of phosphatidylethanolamine from the lumen to the cytosolic leaflet of the trans-Golgi network and ensures the maintenance of asymmetric distribution of phospholipids. May be involved in transport from early endosomes to the trans-Golgi network (TGN). The sequence is that of Probable phospholipid-transporting ATPase DNF3 (DNF3) from Saccharomyces cerevisiae (strain ATCC 204508 / S288c) (Baker's yeast).